We begin with the raw amino-acid sequence, 410 residues long: Lipoyl synthase, mitochondrial (410 aa).

Residues cysteine 134, cysteine 139, cysteine 145, cysteine 165, cysteine 169, cysteine 172, and serine 390 each coordinate [4Fe-4S] cluster. Residues 148–379 (AGKSTAATAT…AKIGNDLGFL (232 aa)) form the Radical SAM core domain.

Belongs to the radical SAM superfamily. Lipoyl synthase family. [4Fe-4S] cluster serves as cofactor.

It is found in the mitochondrion. The catalysed reaction is [[Fe-S] cluster scaffold protein carrying a second [4Fe-4S](2+) cluster] + N(6)-octanoyl-L-lysyl-[protein] + 2 oxidized [2Fe-2S]-[ferredoxin] + 2 S-adenosyl-L-methionine + 4 H(+) = [[Fe-S] cluster scaffold protein] + N(6)-[(R)-dihydrolipoyl]-L-lysyl-[protein] + 4 Fe(3+) + 2 hydrogen sulfide + 2 5'-deoxyadenosine + 2 L-methionine + 2 reduced [2Fe-2S]-[ferredoxin]. It functions in the pathway protein modification; protein lipoylation via endogenous pathway; protein N(6)-(lipoyl)lysine from octanoyl-[acyl-carrier-protein]: step 2/2. Functionally, catalyzes the radical-mediated insertion of two sulfur atoms into the C-6 and C-8 positions of the octanoyl moiety bound to the lipoyl domains of lipoate-dependent enzymes, thereby converting the octanoylated domains into lipoylated derivatives. The sequence is that of Lipoyl synthase, mitochondrial from Schistosoma mansoni (Blood fluke).